The primary structure comprises 384 residues: Glutamate 5-kinase (384 aa).

Lys24 contributes to the ATP binding site. Substrate-binding residues include Ser64, Asp149, and Asn161. ATP is bound by residues 181-182 (TD) and 223-229 (TGGMRTK). The PUA domain maps to 288 to 370 (PGAILIDAGA…RDIQPLLGYT (83 aa)).

The protein belongs to the glutamate 5-kinase family.

It is found in the cytoplasm. The catalysed reaction is L-glutamate + ATP = L-glutamyl 5-phosphate + ADP. It functions in the pathway amino-acid biosynthesis; L-proline biosynthesis; L-glutamate 5-semialdehyde from L-glutamate: step 1/2. Catalyzes the transfer of a phosphate group to glutamate to form L-glutamate 5-phosphate. This is Glutamate 5-kinase from Xylella fastidiosa (strain 9a5c).